We begin with the raw amino-acid sequence, 454 residues long: Pyrrolysine--tRNA ligase (454 aa).

The disordered stretch occupies residues T102–I138. The segment covering E123 to K133 has biased composition (polar residues).

This sequence belongs to the class-II aminoacyl-tRNA synthetase family.

It localises to the cytoplasm. The enzyme catalyses tRNA(Pyl) + L-pyrrolysine + ATP = L-pyrrolysyl-tRNA(Pyl) + AMP + diphosphate. Functionally, catalyzes the attachment of pyrrolysine to tRNA(Pyl). Pyrrolysine is a lysine derivative encoded by the termination codon UAG. This is Pyrrolysine--tRNA ligase from Methanosarcina mazei (strain ATCC BAA-159 / DSM 3647 / Goe1 / Go1 / JCM 11833 / OCM 88) (Methanosarcina frisia).